Here is a 472-residue protein sequence, read N- to C-terminus: Na(+)/H(+) antiporter NhaA (472 aa).

11 helical membrane-spanning segments follow: residues 48–68 (AGGI…NSAW), 91–111 (MSLH…VVGL), 129–149 (ALPV…YFAV), 157–177 (AGWG…LVLL), 185–205 (LIIF…LVIA), 210–230 (HEIS…LLLL), 237–257 (HAIP…HSGV), 337–357 (GPWV…GIDF), 374–394 (VCLG…WIAV), 410–430 (LLGV…ISQL), and 443–463 (LGIL…LYFG).

This sequence belongs to the NhaA Na(+)/H(+) (TC 2.A.33) antiporter family.

Its subcellular location is the cell inner membrane. The enzyme catalyses Na(+)(in) + 2 H(+)(out) = Na(+)(out) + 2 H(+)(in). Functionally, na(+)/H(+) antiporter that extrudes sodium in exchange for external protons. This Syntrophobacter fumaroxidans (strain DSM 10017 / MPOB) protein is Na(+)/H(+) antiporter NhaA.